Here is a 1211-residue protein sequence, read N- to C-terminus: MIDVNKFESMQIGLASPDKIRSWSYGEVKKPETINYRTLKPEKQGLFDERIFGPTKDYECACGKYKRIRYKGRVCDRCGVEVTSAKVRRERMGHIELAAPVSHIWYFKGIPSRMGLVLDMSPRSLEEVIYFASYVVLDPGDTPLEKKQLLTEAEYRDKKAEYGDRFKAEMGAAAIQKLLADVDLEKEAAELKEELKEATGQKRTRAIRRLDILEAFIKSGNKPEWMVMDVIPVMPPDLRPMVQLEGGRFATSDLNDLYRRVINRNNRLKRLLKLQAPGIIVQNEKRMLQEAVDALIDNGRRGRPVAGPGNRPLKSLSHLLKGKQGRFRQNLLGKRVDYSGRSVIDVGPSLKLNQMGLPVPMALELFKPFIMHELVKRGLSANVKSAKRKIDRSDDDVFDVLEDVIKEHPVLLNRAPTLHRLGIQAFEPILVSGKSMRLHPLVCSAYNADFDGDQMAIHVPLSDEAQAEARLLMLAAHHILSPRDGEPIVSPSQDMVIGNYYMTTEDKGREGEGMIFKDTDEAELAYRNDYVSLQTRVGVQVSAFPEKPFTDDQRGKIMVTTVGKLLFNRIMPKDFAYINEPTDANIQNGVDDRFFLEPGQDIHEYLENAPLVPPFKKGFLSDLIAEVYKRYKVTKTSQFLDRIKDLGYYESTISGLTTAMSDIHDLPEKPEILDKAQKQVTLITKQFRRGLITDDERYERVIGAWNDAKDEVQNKLIEHMDIHNPINMMSDSGARGNISNFTQLAGMRGLMASPNGKIMELPVKSNFYEGLSVLEMFISSHGARKGMTDTALKTANSGYLTRRLVDVAQDVVVREKDCGTDRGLEVTAITNGNEMIEPLYDRIMGRYTMKSVFDPKTGEKIVGKNVLIDEEMAQKIVDAGVKKVTIRSAFTCNTEHGVCERCYGRNAATGDRVEAGEAVGTVAAQSIGEPGTQLTLRNFHTGGVAGNDDITQGLPRIQEIVEARNPKGRATITEVTGEVVSIEENPAERTKDITIKGETDTRTYTLPITARMKVAEGDFIHRGAPLNEGSIDPKELIQVRDVLSTETYLLSQVQGVYRMQGIDLLDKHVEIMIRQMMRKVRVMDPGDTDLLPGQLMDISQFRDANKDTLVAGNIPATARPVILGITKAALETNSFLSAASFQETTRVLTDAAIRGKNDPLVGLKENVIIGKIIPAGTGMSAYRNIKPKEVSVAAYSIKDIEAKLKEEDKQN.

Positions 60, 62, 75, and 78 each coordinate Zn(2+). D449, D451, and D453 together coordinate Mg(2+). C818, C892, C899, and C902 together coordinate Zn(2+).

Belongs to the RNA polymerase beta' chain family. As to quaternary structure, the RNAP catalytic core consists of 2 alpha, 1 beta, 1 beta' and 1 omega subunit. When a sigma factor is associated with the core the holoenzyme is formed, which can initiate transcription. The cofactor is Mg(2+). Zn(2+) serves as cofactor.

It catalyses the reaction RNA(n) + a ribonucleoside 5'-triphosphate = RNA(n+1) + diphosphate. In terms of biological role, DNA-dependent RNA polymerase catalyzes the transcription of DNA into RNA using the four ribonucleoside triphosphates as substrates. This chain is DNA-directed RNA polymerase subunit beta', found in Limosilactobacillus reuteri (strain DSM 20016) (Lactobacillus reuteri).